Consider the following 358-residue polypeptide: Replication-associated protein (358 aa).

In terms of domain architecture, CRESS-DNA virus Rep endonuclease spans Arg8–Phe116. Residues Phe15–Tyr18 carry the RCR-1 motif. The a divalent metal cation site is built by Glu49, His57, and His59. The RCR-2 motif lies at His57–His59. Tyr103 (for DNA cleavage activity) is an active-site residue. The RCR-3 signature appears at Tyr103 to Lys106. Position 107 (Asp107) interacts with a divalent metal cation. The binding to RBR1 stretch occupies residues Leu143–Glu153. The interval Lys156–Ala176 is oligomerization. Residue Gly222 to Thr229 participates in ATP binding.

This sequence belongs to the geminiviridae Rep protein family. As to quaternary structure, homooligomer. Interacts with the replication enhancer protein (REn). Interacts with host retinoblastoma-related protein 1 (RBR1), and may thereby induce the transcription of host replicative enzymes even if the cell is not dividing anymore. Interacts with host PCNA. Interacts with host SCE1 protein. It depends on Mg(2+) as a cofactor. The cofactor is Mn(2+).

It localises to the host nucleus. Essential for the replication of viral ssDNA. The closed circular ssDNA genome is first converted to a superhelical dsDNA. Rep binds a specific region at the genome origin of replication. It introduces an endonucleolytic nick within the conserved sequence 5'-TAATATTAC-3' in the intergenic region of the genome present in all geminiviruses, thereby initiating the rolling circle replication (RCR). Following cleavage, binds covalently to the 5'-phosphate of DNA as a tyrosyl ester. The cleavage gives rise to a free 3'-OH that serves as a primer for the cellular DNA polymerase. The polymerase synthesizes the (+) strand DNA by rolling circle mechanism. After one round of replication, a Rep-catalyzed nucleotidyl transfer reaction releases a circular single-stranded virus genome, thereby terminating the replication. Displays origin-specific DNA cleavage, nucleotidyl transferase, ATPase and helicase activities. This chain is Replication-associated protein, found in Beet curly top virus (strain California/Logan) (BCTV).